Reading from the N-terminus, the 314-residue chain is Probable RuBisCO transcriptional regulator (314 aa).

Positions 6–63 constitute an HTH lysR-type domain; sequence FTLDQLKIIKTIHREGSFKTAAKKLYISQPAVSRQVQNLERQLNTPIFYRDKRKARLT. The H-T-H motif DNA-binding region spans 23–42; that stretch reads FKTAAKKLYISQPAVSRQVQ.

Belongs to the LysR transcriptional regulatory family.

The protein localises to the plastid. The protein resides in the chloroplast. Trans-acting transcriptional regulator of RuBisCO genes (rbcL and rbcS) expression. This chain is Probable RuBisCO transcriptional regulator (rbcR), found in Emiliania huxleyi (Coccolithophore).